The sequence spans 162 residues: Disulfide bond formation protein B (162 aa).

Topologically, residues 1-8 (MTPLFRKA) are cytoplasmic. Residues 9–25 (VWLLFAVSVCAFAGSLA) traverse the membrane as a helical segment. The Periplasmic segment spans residues 26–43 (AQYVLGMEPCVLCISQRL). The cysteines at positions 35 and 38 are disulfide-linked. Residues 44-60 (CVLATALCTAIVLMCRP) traverse the membrane as a helical segment. Over 61–67 (RRRAGGL) the chain is Cytoplasmic. A helical membrane pass occupies residues 68-85 (FGAVFISIPAVTGISVAA). Residues 86 to 141 (YQLWLQSLPPGTAPSCGAPWTFRLKGWPLFDWFEPVVRGFGNCAEPDYLLGIALPV) are Periplasmic-facing. The cysteines at positions 101 and 128 are disulfide-linked. A helical membrane pass occupies residues 142 to 160 (WSVAYFLAVVLTVWWAWAR). Over 161 to 162 (AK) the chain is Cytoplasmic.

The protein belongs to the DsbB family.

It is found in the cell inner membrane. Required for disulfide bond formation in some periplasmic proteins. Acts by oxidizing the DsbA protein. The protein is Disulfide bond formation protein B of Neisseria meningitidis serogroup B (strain ATCC BAA-335 / MC58).